Reading from the N-terminus, the 376-residue chain is Gibberellic acid methyltransferase 1 (376 aa).

S-adenosyl-L-homocysteine is bound by residues Tyr-22, Cys-64, Asn-69, Asp-104, Leu-105, Ser-136, and Phe-137. Trp-158 contacts gibberellin A9. Mg(2+)-binding residues include Asn-175, Val-179, Arg-265, Asp-266, Phe-268, and Asn-269.

The protein belongs to the methyltransferase superfamily. Type-7 methyltransferase family. SABATH subfamily. The cofactor is Mg(2+). As to expression, expressed in siliques, developing seeds, anthers and germinating seeds. Not detected in leaves, stems, flowers and roots.

It catalyses the reaction gibberellin A9 + S-adenosyl-L-methionine = O-methyl gibberellin A9 + S-adenosyl-L-homocysteine. Its activity is regulated as follows. Up-regulated by K(+) and NH(4+), down-regulated by Zn(2+), Cu(2+), Fe(2+) and Fe(3+). In terms of biological role, methylates the carboxyl group of several gibberellins (GAs). Substrate preference is GA9 &gt; GA20 &gt; GA3 &gt; GA4 &gt; GA34 &gt; GA51 &gt; GA1 &gt; GA19 &gt; GA12. No activity with diterpenes abietic acid and ent-kaurenoic acid. The polypeptide is Gibberellic acid methyltransferase 1 (GAMT1) (Arabidopsis thaliana (Mouse-ear cress)).